A 157-amino-acid chain; its full sequence is Protein FAM219A (157 aa).

Methionine 1 is subject to N-acetylmethionine. The segment at 1–103 is disordered; that stretch reads MMEEIDRFQD…SRYSSSGYSS (103 aa). Over residues 17 to 33 the composition is skewed to basic and acidic residues; sequence SDRDCDAREEKQRELAR. Polar residues predominate over residues 38-52; that stretch reads KNGSMGSPVNQQPKK. A phosphoserine mark is found at serine 44 and serine 74. The residue at position 85 (threonine 85) is a Phosphothreonine. Residues serine 87 and serine 94 each carry the phosphoserine modification. Low complexity predominate over residues 94–103; the sequence is SRYSSSGYSS.

It belongs to the FAM219 family.

The chain is Protein FAM219A (Fam219a) from Mus musculus (Mouse).